We begin with the raw amino-acid sequence, 350 residues long: DNA-directed RNA polymerase subunit alpha (350 aa).

The tract at residues 1–226 is alpha N-terminal domain (alpha-NTD); the sequence is MLISQRPTLS…ELFGLARELN (226 aa). Residues 241–350 are alpha C-terminal domain (alpha-CTD); it reads ADHIASFALP…NQDYAETEQL (110 aa). The tract at residues 326–350 is disordered; that stretch reads ATGTWNSDAGYDLEDNQDYAETEQL. Over residues 336-350 the composition is skewed to acidic residues; that stretch reads YDLEDNQDYAETEQL.

Belongs to the RNA polymerase alpha chain family. Homodimer. The RNAP catalytic core consists of 2 alpha, 1 beta, 1 beta' and 1 omega subunit. When a sigma factor is associated with the core the holoenzyme is formed, which can initiate transcription.

The enzyme catalyses RNA(n) + a ribonucleoside 5'-triphosphate = RNA(n+1) + diphosphate. DNA-dependent RNA polymerase catalyzes the transcription of DNA into RNA using the four ribonucleoside triphosphates as substrates. This chain is DNA-directed RNA polymerase subunit alpha, found in Mycobacterium sp. (strain JLS).